We begin with the raw amino-acid sequence, 266 residues long: Putative [LysW]-aminoadipate/[LysW]-glutamate kinase (266 aa).

Residues 36–37 (GG), arginine 63, and asparagine 168 each bind substrate.

The protein belongs to the acetylglutamate kinase family. LysZ subfamily.

The protein localises to the cytoplasm. The catalysed reaction is [amino-group carrier protein]-C-terminal-N-(1,4-dicarboxybutan-1-yl)-L-glutamine + ATP = [amino-group carrier protein]-C-terminal-N-(1-carboxy-5-phosphooxy-5-oxopentan-1-yl)-L-glutamine + ADP. It catalyses the reaction [amino-group carrier protein]-C-terminal-gamma-(L-glutamyl)-L-glutamate + ATP = [amino-group carrier protein]-C-terminal-gamma-(5-phospho-L-glutamyl)-L-glutamate + ADP. Its pathway is amino-acid biosynthesis; L-lysine biosynthesis via AAA pathway; L-lysine from L-alpha-aminoadipate (Thermus route): step 2/5. The protein operates within amino-acid biosynthesis; L-arginine biosynthesis. Involved in both the arginine and lysine biosynthetic pathways. Phosphorylates the LysW-bound precursors glutamate (for arginine biosynthesis), respectively alpha-aminoadipate (for lysine biosynthesis). In Cenarchaeum symbiosum (strain A), this protein is Putative [LysW]-aminoadipate/[LysW]-glutamate kinase.